The sequence spans 74 residues: Homeobox protein Hox-B8 (74 aa).

Residues 1 to 24 (YTDCKLAASGLGEEAESSEQSPSP) are compositionally biased toward low complexity. The interval 1-28 (YTDCKLAASGLGEEAESSEQSPSPTQLF) is disordered. The Antp-type hexapeptide signature appears at 27–32 (LFPWMR). The homeobox DNA-binding region spans 39–74 (RRRGRQTYSRYQTLELEKEFLFNPYLTRKRRIEVSR).

This sequence belongs to the Antp homeobox family.

The protein localises to the nucleus. Its function is as follows. Sequence-specific transcription factor which is part of a developmental regulatory system that provides cells with specific positional identities on the anterior-posterior axis. In Gallus gallus (Chicken), this protein is Homeobox protein Hox-B8 (HOXB8).